The following is a 102-amino-acid chain: Carboxysome shell protein CcmK3 (102 aa).

Positions 4-90 (AVGTIQTLGF…PQENVETVMP (87 aa)) constitute a BMC domain.

It belongs to the bacterial microcompartments protein family. CcmK subfamily. Interacts stably with CcmK4, probably forms heterohexamers with a 1:2 CcmK3:CcmK4 stoichiometry. Bulky residues in the pore region probably preclude the formation of homohexamers by this subunit.

It localises to the carboxysome. A non-essential, minor shell protein of the carboxysome, a polyhedral inclusion where RuBisCO (ribulose bisphosphate carboxylase, rbcL-rbcS) is sequestered. Hexamers form sheets that form the facets of the polyhedral carboxysome. In PCC 7942 there are several CcmK paralogs with presumably functional differences. This subunit probably only makes heterohexamers with CcmK4. The CcmK3-CcmK4 heterohexmers have been suggested to cap other hexamers, perhaps to alter metabolite flux. The chain is Carboxysome shell protein CcmK3 from Synechococcus elongatus (strain ATCC 33912 / PCC 7942 / FACHB-805) (Anacystis nidulans R2).